Here is a 173-residue protein sequence, read N- to C-terminus: MARMNRPAPVEVTYKNMRFLITHNPTNATLNKFIEELKKYGVTTIVRVCEATYDTALVEKEGIHVLDWPFDDGAPPSNQIVDGWLSLVKIKFREEPGCCIAVHCVAGLGRAPVLVALALIEGGMKYEDAVQFIRQKRRGAFNSKQLLYLEKYRPKMRLRFKDSNGHRNNCCIQ.

The region spanning 8-161 (APVEVTYKNM…YRPKMRLRFK (154 aa)) is the Tyrosine-protein phosphatase domain. A disulfide bridge links cysteine 49 with cysteine 104. Residue aspartate 72 is the Proton donor of the active site. The interaction with ATF5 stretch occupies residues 97 to 132 (GCCIAVHCVAGLGRAPVLVALALIEGGMKYEDAVQF). Cysteine 104 (phosphocysteine intermediate) is an active-site residue. 105–110 (VAGLGR) contacts phosphate. Arginine 110 serves as a coordination point for substrate. Cysteine 170 bears the Cysteine methyl ester mark. Residue cysteine 170 is the site of S-farnesyl cysteine attachment. Positions 171-173 (CIQ) are cleaved as a propeptide — removed in mature form.

Belongs to the protein-tyrosine phosphatase family. Homotrimer. Interacts with ATF5 and tubulin. In terms of processing, farnesylated. Farnesylation is required for membrane targeting.

The protein resides in the cell membrane. Its subcellular location is the early endosome. The protein localises to the endoplasmic reticulum. It localises to the cytoplasm. It is found in the cytoskeleton. The protein resides in the spindle. Its subcellular location is the nucleus. It carries out the reaction O-phospho-L-tyrosyl-[protein] + H2O = L-tyrosyl-[protein] + phosphate. Its activity is regulated as follows. Inhibited by sodium orthovanadate and pentamidine. Its function is as follows. Protein tyrosine phosphatase which stimulates progression from G1 into S phase during mitosis. May play a role in the development and maintenance of differentiating epithelial tissues. This chain is Protein tyrosine phosphatase type IVA 1 (PTP4A1), found in Pongo abelii (Sumatran orangutan).